A 1479-amino-acid polypeptide reads, in one-letter code: Rhoptry neck protein 2 (1479 aa).

The signal sequence occupies residues 1–24 (MTKRAGLPLGRAFLVLILLSAADS). Residues 25–1277 (LFFSSFPRSA…EQRRKSRKQA (1253 aa)) are Cytoplasmic-facing. 2 disordered regions span residues 49-68 (PDSD…TFRP) and 291-316 (VYAT…SPTS). Residues 1278-1298 (IIGVLTLGMMGLYALLNVADI) traverse the membrane as a helical segment. Residues 1297-1333 (DIVQHMEDIGGAPPVSCVTNEILGVTCAPQAIAKATT) are interaction with AMA1. Residues 1299 to 1479 (VQHMEDIGGA…FPMSAPLIKA (181 aa)) lie on the Extracellular side of the membrane. Cysteine 1313 and cysteine 1323 form a disulfide bridge. A disordered region spans residues 1419 to 1445 (TYRKTEQETKQPPRPRNLHNPSSWGDT).

This sequence belongs to the apicomplexan parasites RON2 family. Component of the moving junction (MJ) complex, composed of AMA1, a transmembrane protein on the parasite surface, and a complex of the rhoptry neck proteins RON2, RON4, RON5 and RON8 localized to the cytoplasmic face of the host plasma membrane. Interacts (via C-terminus) with AMA1 (via ectodomain); RON2 serves as the receptor for AMA1 on the host plasma membrane. AMA1 and the RON proteins are initially in distinct compartments within the parasite, namely the micronemes and the rhoptries, and interaction happens only upon initiation of invasion when the micronemes and rhoptries discharge.

The protein localises to the secreted. It localises to the cytoplasm. Its subcellular location is the host cell membrane. Functionally, essential rhoptry neck protein that plays an important role in host cell invasion. Upon host invasion by tachyzoites, the protein is injected into the host cell where it functions as a receptor for apical membrane antigen 1 (AMA1) on the parasite. Part of the moving junction (MJ) complex, a ringlike structure formed between the plasma membranes of the apical tip of the parasite and the target host cell. During invasion, the MJ migrates from the anterior to the posterior of the parasite, leading to internalization of the parasite into a parasitophorous vacuole (PV). In Toxoplasma gondii (strain ATCC 50611 / Me49), this protein is Rhoptry neck protein 2 (RON2).